The following is a 538-amino-acid chain: Atos homolog protein B (538 aa).

4 disordered regions span residues 1 to 103, 130 to 149, 163 to 185, and 199 to 272; these read MRHV…GLVS, GSATSSWTSGTQSTPWPSSN, PDQGGQGCLGESPGPAPSGQLHT, and KSPV…LGCP. Over residues 130–148 the composition is skewed to low complexity; the sequence is GSATSSWTSGTQSTPWPSS. Positions 227-238 are enriched in pro residues; that stretch reads HTPPGPGPPGPC. A phosphoserine mark is found at serine 254 and serine 255. The interval 348–430 is required for macropage invasion; it reads LLGNFEESLL…VPKVGTIQVT (83 aa). The transactivation domain 1 (TAD1) stretch occupies residues 436–444; it reads QTVVKMFLV.

It belongs to the ATOS family.

It localises to the nucleus. Transcription regulator that may syncronize transcriptional and translational programs. The polypeptide is Atos homolog protein B (Rattus norvegicus (Rat)).